The primary structure comprises 622 residues: 1-deoxy-D-xylulose-5-phosphate synthase (622 aa).

Thiamine diphosphate-binding positions include histidine 80 and 121 to 123; that span reads GHS. Aspartate 152 contributes to the Mg(2+) binding site. Thiamine diphosphate-binding positions include 153-154, asparagine 181, tyrosine 288, and glutamate 370; that span reads GA. Mg(2+) is bound at residue asparagine 181.

The protein belongs to the transketolase family. DXPS subfamily. In terms of assembly, homodimer. The cofactor is Mg(2+). Thiamine diphosphate is required as a cofactor.

It catalyses the reaction D-glyceraldehyde 3-phosphate + pyruvate + H(+) = 1-deoxy-D-xylulose 5-phosphate + CO2. It functions in the pathway metabolic intermediate biosynthesis; 1-deoxy-D-xylulose 5-phosphate biosynthesis; 1-deoxy-D-xylulose 5-phosphate from D-glyceraldehyde 3-phosphate and pyruvate: step 1/1. In terms of biological role, catalyzes the acyloin condensation reaction between C atoms 2 and 3 of pyruvate and glyceraldehyde 3-phosphate to yield 1-deoxy-D-xylulose-5-phosphate (DXP). The polypeptide is 1-deoxy-D-xylulose-5-phosphate synthase (Hamiltonella defensa subsp. Acyrthosiphon pisum (strain 5AT)).